The primary structure comprises 467 residues: E3 ubiquitin-protein ligase IE61 (467 aa).

Residues cysteine 19–arginine 58 form an RING-type zinc finger. 4 disordered regions span residues glycine 101–lysine 171, glutamine 205–threonine 238, isoleucine 344–arginine 364, and aspartate 413–serine 467. Over residues glutamate 116–arginine 143 the composition is skewed to polar residues. Positions serine 149 to proline 161 are enriched in low complexity. Polar residues predominate over residues threonine 162–lysine 171. The segment covering arginine 228–threonine 238 has biased composition (basic and acidic residues). 2 stretches are compositionally biased toward low complexity: residues glycine 429–serine 443 and lysine 450–glycine 459.

In terms of assembly, interacts with host BTRC; this interaction seems to inactivate SCF-mediated protein degradation in general. Post-translationally, auto-ubiquitinated.

It carries out the reaction S-ubiquitinyl-[E2 ubiquitin-conjugating enzyme]-L-cysteine + [acceptor protein]-L-lysine = [E2 ubiquitin-conjugating enzyme]-L-cysteine + N(6)-ubiquitinyl-[acceptor protein]-L-lysine.. Functionally, RING-finger E3 ubiquitin ligase that degrades host SP100, one of the major components of ND10 nuclear bodies, thereby disrupting the organization of these bodies. Also plays a role in the inhibition of host NF-kappa-B pathway by blocking the SCF(BTRC)-mediated addition of ubiquitin chains to host I-kappa-B-alpha/NFKBIA, thereby interfering with its degradation. The sequence is that of E3 ubiquitin-protein ligase IE61 (61) from Varicella-zoster virus (strain Dumas) (HHV-3).